Reading from the N-terminus, the 129-residue chain is Biogenesis of lysosome-related organelles complex 1 subunit CNL1 (129 aa).

It belongs to the BLOC1S4 family. In terms of assembly, component of the biogenesis of lysosome-related organelles complex-1 (BLOC-1).

It localises to the cytoplasm. Functionally, component of the biogenesis of lysosome-related organelles complex-1 (BLOC-1), a complex that is involved in endosomal cargo sorting. The protein is Biogenesis of lysosome-related organelles complex 1 subunit CNL1 (CLN1) of Eremothecium gossypii (strain ATCC 10895 / CBS 109.51 / FGSC 9923 / NRRL Y-1056) (Yeast).